The sequence spans 308 residues: Pantothenate kinase (308 aa).

91–98 (GSVAVGKS) provides a ligand contact to ATP.

It belongs to the prokaryotic pantothenate kinase family.

The protein localises to the cytoplasm. It catalyses the reaction (R)-pantothenate + ATP = (R)-4'-phosphopantothenate + ADP + H(+). The protein operates within cofactor biosynthesis; coenzyme A biosynthesis; CoA from (R)-pantothenate: step 1/5. This Lacticaseibacillus paracasei (strain ATCC 334 / BCRC 17002 / CCUG 31169 / CIP 107868 / KCTC 3260 / NRRL B-441) (Lactobacillus paracasei) protein is Pantothenate kinase.